The following is a 114-amino-acid chain: uncharacterized protein (114 aa).

Positions glutamate 2–leucine 97 constitute an HTH arsR-type domain. Residues glycine 37 to arginine 60 constitute a DNA-binding region (H-T-H motif).

This is an uncharacterized protein from Mycobacterium tuberculosis (strain CDC 1551 / Oshkosh).